We begin with the raw amino-acid sequence, 70 residues long: uncharacterized protein (70 aa).

The segment at 21–43 (YECPICGEIYIKRKSMITHLRKH) adopts a C2H2-type zinc-finger fold.

This is an uncharacterized protein from Saccharolobus islandicus (Sulfolobus islandicus).